The sequence spans 152 residues: Ribosome maturation factor RimP (152 aa).

It belongs to the RimP family.

It is found in the cytoplasm. Its function is as follows. Required for maturation of 30S ribosomal subunits. This chain is Ribosome maturation factor RimP, found in Pseudomonas putida (strain GB-1).